Here is a 212-residue protein sequence, read N- to C-terminus: MARLSQELQDYFFKEDRGPTVNLAQVLAIAKEKIFGIVLVILSLPSALPIPAPGYSTPFGVLIFLVAIQLMAGRQELWLPLSWQSKTIKTSKAQGIVKAGLPWLKRLEAIAHPRFPLVCQSRLGKILMGITVGSMAISMMIPIPGTNTLPAMSIFITGFGLQEDDGLITGAGMIFSVLIGVLMVSVIYVFFNGGITIIDILKDWLKVQFGGA.

The next 4 membrane-spanning stretches (helical) occupy residues 34 to 54, 59 to 79, 126 to 146, and 171 to 191; these read IFGI…PAPG, FGVL…ELWL, ILMG…IPGT, and AGMI…YVFF.

To R.meliloti ExoD.

It localises to the cell membrane. This is an uncharacterized protein from Synechocystis sp. (strain ATCC 27184 / PCC 6803 / Kazusa).